The following is a 198-amino-acid chain: Recombination protein RecR (198 aa).

Residues Cys-57 to Cys-72 form a C4-type zinc finger. In terms of domain architecture, Toprim spans Arg-80–Pro-175.

The protein belongs to the RecR family.

In terms of biological role, may play a role in DNA repair. It seems to be involved in an RecBC-independent recombinational process of DNA repair. It may act with RecF and RecO. The chain is Recombination protein RecR from Anaeromyxobacter sp. (strain Fw109-5).